A 189-amino-acid polypeptide reads, in one-letter code: dTTP/UTP pyrophosphatase (189 aa).

The active-site Proton acceptor is Asp71.

This sequence belongs to the Maf family. YhdE subfamily. A divalent metal cation serves as cofactor.

It is found in the cytoplasm. It carries out the reaction dTTP + H2O = dTMP + diphosphate + H(+). It catalyses the reaction UTP + H2O = UMP + diphosphate + H(+). Nucleoside triphosphate pyrophosphatase that hydrolyzes dTTP and UTP. May have a dual role in cell division arrest and in preventing the incorporation of modified nucleotides into cellular nucleic acids. The protein is dTTP/UTP pyrophosphatase of Pseudoalteromonas translucida (strain TAC 125).